The chain runs to 179 residues: Large ribosomal subunit protein uL6 (179 aa).

This sequence belongs to the universal ribosomal protein uL6 family. Part of the 50S ribosomal subunit.

Its function is as follows. This protein binds to the 23S rRNA, and is important in its secondary structure. It is located near the subunit interface in the base of the L7/L12 stalk, and near the tRNA binding site of the peptidyltransferase center. The protein is Large ribosomal subunit protein uL6 of Chlorobium luteolum (strain DSM 273 / BCRC 81028 / 2530) (Pelodictyon luteolum).